The primary structure comprises 858 residues: Protein lines (858 aa).

Positions 1–102 (MDTSSAAGSG…NSPTTTPCSS (102 aa)) are disordered. 2 stretches are compositionally biased toward low complexity: residues 20–30 (STVATSTTSAS) and 65–102 (LDAN…PCSS).

It belongs to the protein lines family. In terms of assembly, interacts with drm. Expressed throughout the embryo, including the hindgut, posterior midgut and embryonic epidermis.

It is found in the cytoplasm. It localises to the nucleus. Functionally, has a dual role as a segment polarity protein and as a modulator of the Abd-B protein. Required for Abd-B to activate the transcription of genes (including ems, cut and sal) that are involved in posterior spiracle morphogenesis. Also required for Abd-B to form an eighth abdominal denticle belt. Acts in a hierarchy downstream of drm and upstream of bowl during foregut and hindgut patterning and morphogenesis. Involved in cell rearrangement during elongation of the embryonic hindgut. Required to regulate expression of embryonic hindgut patterning genes in order to establish the large intestine and at least some rectum, and to repress small intestine fate. Required for late wingless (wg)-dependent cell fate specification in the dorsal embryonic epidermis. Acts in concert with wg to regulate expression of wg itself and also to regulate wg-target genes. May have a role in ventral epidermal patterning, independent of wg signaling. The chain is Protein lines from Drosophila melanogaster (Fruit fly).